Here is a 516-residue protein sequence, read N- to C-terminus: Levanbiose-producing levanase (516 aa).

Topologically, residues 1–5 (MNYIK) are cytoplasmic. Residues 6-26 (AGKWLTVFLTFLGILLFIDLF) traverse the membrane as a helical segment. The Extracellular portion of the chain corresponds to 27–516 (PKEEHDQKTK…TVKHFDSIHE (490 aa)). Residues 55–58 (WKND), 116–117 (WT), 181–182 (RD), E230, and W318 contribute to the substrate site. The active site involves D58.

It belongs to the glycosyl hydrolase 32 family.

It is found in the cell membrane. It catalyses the reaction Hydrolysis of (2-&gt;6)-beta-D-fructofuranan, to remove successive disaccharide residues as levanbiose, i.e. 6-(beta-D-fructofuranosyl)-D-fructose, from the end of the chain.. In terms of biological role, catalyzes the degradation of levan mainly into levanbiose (difructose). Is not active on sucrose. The sequence is that of Levanbiose-producing levanase (levB) from Bacillus subtilis (strain 168).